A 230-amino-acid chain; its full sequence is Esterase OVCA2 (230 aa).

Catalysis depends on charge relay system residues S124, D182, and H209.

It belongs to the LovG family.

The catalysed reaction is a carboxylic ester + H2O = an alcohol + a carboxylate + H(+). Functionally, exhibits ester hydrolase activity with a strong preference for long-chain alkyl ester substrates and high selectivity against a variety of short, branched, and substituted esters. Is able to hydrolyze ester bonds within a wide range of p-nitrophenyl derivatives (C2-C14) in vitro, with a strong preference toward substrates of &gt;8 carbons. The chain is Esterase OVCA2 (ovca2) from Xenopus tropicalis (Western clawed frog).